A 132-amino-acid chain; its full sequence is Small ribosomal subunit protein uS11 (132 aa).

The protein belongs to the universal ribosomal protein uS11 family. Part of the 30S ribosomal subunit.

Functionally, located on the platform of the 30S subunit. In Caldivirga maquilingensis (strain ATCC 700844 / DSM 13496 / JCM 10307 / IC-167), this protein is Small ribosomal subunit protein uS11.